We begin with the raw amino-acid sequence, 273 residues long: Putative pyruvate, phosphate dikinase regulatory protein (273 aa).

Residue 149–156 (GPSRTSKT) coordinates ADP.

The protein belongs to the pyruvate, phosphate/water dikinase regulatory protein family. PDRP subfamily.

The enzyme catalyses N(tele)-phospho-L-histidyl/L-threonyl-[pyruvate, phosphate dikinase] + ADP = N(tele)-phospho-L-histidyl/O-phospho-L-threonyl-[pyruvate, phosphate dikinase] + AMP + H(+). It catalyses the reaction N(tele)-phospho-L-histidyl/O-phospho-L-threonyl-[pyruvate, phosphate dikinase] + phosphate + H(+) = N(tele)-phospho-L-histidyl/L-threonyl-[pyruvate, phosphate dikinase] + diphosphate. In terms of biological role, bifunctional serine/threonine kinase and phosphorylase involved in the regulation of the pyruvate, phosphate dikinase (PPDK) by catalyzing its phosphorylation/dephosphorylation. The chain is Putative pyruvate, phosphate dikinase regulatory protein from Rickettsia bellii (strain OSU 85-389).